A 76-amino-acid chain; its full sequence is Gallerimycin (76 aa).

The signal sequence occupies residues Met1–Cys19.

It belongs to the invertebrate defensin family.

Its function is as follows. Has antifungal activity against the entomopathogenic fungus M.nisopliae, but does not display any antifungal activity against S.cerevisiae nor any antimicrobial activity against M.luteus, B.subtilis, and E.coli. In Galleria mellonella (Greater wax moth), this protein is Gallerimycin (LOC113523440).